The following is a 153-amino-acid chain: UPAR/Ly6 domain-containing protein cold (153 aa).

Residues 1 to 25 form the signal peptide; sequence MKSWEIAVVLVAAVYLCSQVNFVAG. Topologically, residues 26–130 are extracellular; that stretch reads LECYVCSNQT…FVISGAPSRQ (105 aa). Intrachain disulfides connect cysteine 28–cysteine 55, cysteine 31–cysteine 41, cysteine 48–cysteine 81, cysteine 87–cysteine 112, cysteine 99–cysteine 109, and cysteine 113–cysteine 118. A glycan (N-linked (GlcNAc...) asparagine) is linked at asparagine 33. Serine 124 carries the GPI-anchor amidated serine lipid modification. A propeptide spans 125–153 (removed in mature form); the sequence is GAPSRQGYGVCLTLLTALLGLGSWLIPRS. Residues 131-151 traverse the membrane as a helical segment; sequence GYGVCLTLLTALLGLGSWLIP. The Cytoplasmic portion of the chain corresponds to 152 to 153; that stretch reads RS.

The protein belongs to the snake toxin-like superfamily. Post-translationally, GPI-anchored. In terms of tissue distribution, expressed in all tissues that form septate junctions, including hindgut, trachea, epidermis and dorsal pouch. Expressed in subperineurial glial cells that form the hemolymph-brain barrier of the central nervous system.

It is found in the endosome membrane. Its subcellular location is the endoplasmic reticulum membrane. The protein localises to the cell membrane. It localises to the cell junction. The protein resides in the septate junction. Functionally, required for septate junction assembly, possibly by organizing the preassembly and transport of septate junction proteins such as dlg1/disks large 1 and Nrx-IV/Neurexin-IV. Involved in paracellular barrier functions of trachea, hindgut and salivary gland mediated by epithelial cell septate junctions. Involved in paracellular barrier functions of the hemolymph-brain barrier (insect blood-brain barrier) mediated by glial cell septate junctions. Required for maintenance of septate junctions in imaginal disk epithelial cells. Involved in the epithelial cell wound-healing response. Directly or indirectly mediates cell-cell adhesion during septate junction formation. In Drosophila melanogaster (Fruit fly), this protein is UPAR/Ly6 domain-containing protein cold.